The sequence spans 254 residues: MWQLLLPTALLLLVSAGMRAEDLPKAVVFLEPQWYRVLEKDRVTLKCQGAYSPEDNSTRWFHNESLISSQTSSYFIAAARVNNSGEYRCQTSLSTLSDPVQLEVHIGWLLLQAPRWVFKEEESIHLRCHSWKNTLLHKVTYLQNGKGRKYFHQNSDFYIPKATLKDSGSYFCRGLIGSKNVSSETVNITITQDLAVSSISSFFPPGYQVSFCLVMVLLFAVDTGLYFSMKKSIPSSTRDWEDHKFKWSKDPQDK.

Positions 1-16 (MWQLLLPTALLLLVSA) are cleaved as a signal peptide. Topologically, residues 17 to 208 (GMRAEDLPKA…ISSFFPPGYQ (192 aa)) are extracellular. Ig-like C2-type domains are found at residues 24 to 105 (PKAV…LEVH) and 107 to 189 (GWLL…VNIT). 2 cysteine pairs are disulfide-bonded: Cys-47–Cys-89 and Cys-128–Cys-172. 3 N-linked (GlcNAc...) asparagine glycosylation sites follow: Asn-56, Asn-63, and Asn-82. Residues Asn-180 and Asn-187 are each glycosylated (N-linked (GlcNAc...) asparagine). Residues 209 to 229 (VSFCLVMVLLFAVDTGLYFSM) traverse the membrane as a helical segment. Topologically, residues 230 to 254 (KKSIPSSTRDWEDHKFKWSKDPQDK) are cytoplasmic.

Forms a heterooligomeric complex with ITAM-containing signaling subunits, either a homodimer of CD247, a homodimer of FCER1G or a heterodimer of CD247 and FCER1G. Interacts (via transmembrane domain) with signaling subunits; this interaction is a prerequisite for receptor complex expression on the cell surface and intracellular signal transduction. Binds the Fc region of antigen-complexed IgG with a preference for IgG1 and IgG3 isotypes. Interacts with CD2; this interaction is involved in NK cell activation and cytotoxicity. Interacts with S100A4; this interaction inhibits PKC-dependent phosphorylation of FCGR3A. Post-translationally, glycosylated. Glycosylation plays an inhibitory role in the interaction with IgG1 and IgG2. In terms of processing, undergoes rapid ectodomain shedding upon NK cell stimulation. The soluble form is produced by a proteolytic cleavage mediated by ADAM17. Repeated stimulation causes receptor shedding, a mechanism that allows for increased NK cell motility and detachment from opsonized target cells while avoiding activation-induced NK cell apoptosis. As to expression, lymphocytes and monocytes.

Its subcellular location is the cell membrane. It is found in the secreted. In terms of biological role, receptor for the invariable Fc fragment of immunoglobulin gamma (IgG). Optimally activated upon binding of clustered antigen-IgG complexes displayed on cell surfaces, triggers lysis of antibody-coated cells, a process known as antibody-dependent cellular cytotoxicity (ADCC). Does not bind free monomeric IgG, thus avoiding inappropriate effector cell activation in the absence of antigenic trigger. Mediates IgG effector functions on natural killer (NK) cells. Binds antigen-IgG complexes generated upon infection and triggers NK cell-dependent cytokine production and degranulation to limit viral load and propagation. Involved in the generation of memory-like adaptive NK cells capable to produce high amounts of IFNG and to efficiently eliminate virus-infected cells via ADCC. Regulates NK cell survival and proliferation, in particular by preventing NK cell progenitor apoptosis. Fc-binding subunit that associates with CD247 and/or FCER1G adapters to form functional signaling complexes. Following the engagement of antigen-IgG complexes, triggers phosphorylation of immunoreceptor tyrosine-based activation motif (ITAM)-containing adapters with subsequent activation of phosphatidylinositol 3-kinase signaling and sustained elevation of intracellular calcium that ultimately drive NK cell activation. The ITAM-dependent signaling coupled to receptor phosphorylation by PKC mediates robust intracellular calcium flux that leads to production of pro-inflammatory cytokines, whereas in the absence of receptor phosphorylation it mainly activates phosphatidylinositol 3-kinase signaling leading to cell degranulation. Costimulates NK cells and trigger lysis of target cells independently of IgG binding. Mediates the antitumor activities of therapeutic antibodies. Upon ligation on monocytes triggers TNFA-dependent ADCC of IgG-coated tumor cells. Mediates enhanced ADCC in response to afucosylated IgGs. In Macaca fascicularis (Crab-eating macaque), this protein is Low affinity immunoglobulin gamma Fc region receptor III-A (FCGR3A).